We begin with the raw amino-acid sequence, 130 residues long: Protein ApaG (130 aa).

One can recognise an ApaG domain in the interval 3–127 (RALTRDIEVT…FSLDSPGLMR (125 aa)).

The polypeptide is Protein ApaG (Agrobacterium fabrum (strain C58 / ATCC 33970) (Agrobacterium tumefaciens (strain C58))).